A 567-amino-acid chain; its full sequence is MFLPTTREEMRKLGWKELDIILVTGDAYVDHPSFGVAFIGHYLVSHGFKVGIIAQPDWRTEKDITRLGRPRLFFGVTAGNVDSMVANYTASKKKRKTDDYTPGGIGGKRPDRATIVYTNLIKRFFPEVPVVLGGLEASLRRFAHYDWWSDRVRKSVLVDSKADLLVYGMGEKAVLGIAQILSRTGDIEKCKSIRGVVWWASQKPEEGIELPSYDEISENPEKYAEALKLQTWYTDPYKNIPIYQRQDTRYVVQNPPQPPLSQEELDRLYLLPFEREVHPFYAKMGKVKAIETVKFSITAVRGCFGNCSFCALTQHQTTHVSYRSKDSILEEVRILTKKKDFKGTITDVGGPTANLYGSGCSIRETKGQCQKFCLYPIVCKVVRPNHDEFISLLESIRQIPGVRNVFVSSGIRHDFVFAEKDPDVFIRELVKYTPGQLKLAPEHAHPKVLSLMRKPPVELFLEFKKRFETLAKKMGKRKYVIGYFIVGHPGEGWRENNYLRDFILKHLGYFPQQIQIFTPTPGTVSTAMYYSGVDPFTGEKVHVERSLKVRNKMKENVLFKKKGREKR.

In terms of domain architecture, Radical SAM core spans 288 to 560 (KAIETVKFSI…NKMKENVLFK (273 aa)). [4Fe-4S] cluster contacts are provided by cysteine 303, cysteine 307, and cysteine 310.

It belongs to the UPF0313 family. Requires [4Fe-4S] cluster as cofactor.

This chain is UPF0313 protein TM_0337, found in Thermotoga maritima (strain ATCC 43589 / DSM 3109 / JCM 10099 / NBRC 100826 / MSB8).